The following is a 339-amino-acid chain: Anthranilate phosphoribosyltransferase (339 aa).

5-phospho-alpha-D-ribose 1-diphosphate is bound by residues Gly-81, 84–85 (GD), Thr-89, 91–94 (NVST), 109–117 (KHGNRSVSS), and Ser-121. Gly-81 is a binding site for anthranilate. Ser-93 contributes to the Mg(2+) binding site. Anthranilate is bound at residue Asn-112. Arg-167 contributes to the anthranilate binding site. 2 residues coordinate Mg(2+): Asp-226 and Glu-227.

The protein belongs to the anthranilate phosphoribosyltransferase family. In terms of assembly, homodimer. Mg(2+) is required as a cofactor.

The catalysed reaction is N-(5-phospho-beta-D-ribosyl)anthranilate + diphosphate = 5-phospho-alpha-D-ribose 1-diphosphate + anthranilate. It participates in amino-acid biosynthesis; L-tryptophan biosynthesis; L-tryptophan from chorismate: step 2/5. Catalyzes the transfer of the phosphoribosyl group of 5-phosphorylribose-1-pyrophosphate (PRPP) to anthranilate to yield N-(5'-phosphoribosyl)-anthranilate (PRA). This Persephonella marina (strain DSM 14350 / EX-H1) protein is Anthranilate phosphoribosyltransferase.